We begin with the raw amino-acid sequence, 349 residues long: Flap endonuclease 1 (349 aa).

The interval 1-98 (MDLADLVKDV…EELERRRKAK (98 aa)) is N-domain. Positions 27, 80, 152, 154, 173, 175, and 236 each coordinate Mg(2+). An I-domain region spans residues 116 to 258 (ELRKYSQAIL…RALKIIKKYG (143 aa)). The segment at 341–349 (RQTGLDRWF) is interaction with PCNA.

Belongs to the XPG/RAD2 endonuclease family. FEN1 subfamily. As to quaternary structure, interacts with PCNA via subunit PCNA1. Mg(2+) serves as cofactor.

Its activity is regulated as follows. Heterotrimeric PCNA stimulates the nuclease activity without altering cleavage specificity. Functionally, structure-specific nuclease with 5'-flap endonuclease and 5'-3' exonuclease activities involved in DNA replication and repair. During DNA replication, cleaves the 5'-overhanging flap structure that is generated by displacement synthesis when DNA polymerase encounters the 5'-end of a downstream Okazaki fragment. Binds the unpaired 3'-DNA end and kinks the DNA to facilitate 5' cleavage specificity. Cleaves one nucleotide into the double-stranded DNA from the junction in flap DNA, leaving a nick for ligation. Also involved in the base excision repair (BER) pathway. Acts as a genome stabilization factor that prevents flaps from equilibrating into structures that lead to duplications and deletions. Also possesses 5'-3' exonuclease activity on nicked or gapped double-stranded DNA. DNA polymerase I, DNA ligase and the flap endonuclease may be constitutively associated with the PCNA heterotrimer forming a scanning complex able to couple DNA synthesis and Okazaki fragment maturation. This chain is Flap endonuclease 1, found in Saccharolobus solfataricus (strain ATCC 35092 / DSM 1617 / JCM 11322 / P2) (Sulfolobus solfataricus).